The sequence spans 309 residues: Fructosamine-3-kinase (309 aa).

Methionine 1 is modified (N-acetylmethionine). 89-91 is a binding site for ATP; that stretch reads EHL. The active-site Proton acceptor is the aspartate 217.

Belongs to the fructosamine kinase family. Monomer. In terms of tissue distribution, expressed in red blood cells, brain, heart, kidney and muscle. Lower expression is observed in liver. Not expressed in lung, spleen, testis and thymus.

The enzyme catalyses N(6)-(D-fructosyl)-L-lysyl-[protein] + ATP = N(6)-(3-O-phospho-D-fructosyl)-L-lysyl-[protein] + ADP + H(+). It catalyses the reaction N(6)-D-ribulosyl-L-lysyl-[protein] + ATP = N(6)-(3-O-phospho-D-ribulosyl)-L-lysyl-[protein] + ADP + H(+). The catalysed reaction is N(6)-(D-psicosyl)-L-lysyl-[protein] + ATP = N(6)-(3-O-phospho-D-psicosyl)-L-lysyl-[protein] + ADP + H(+). Functionally, fructosamine-3-kinase involved in protein deglycation by mediating phosphorylation of fructoselysine residues on glycated proteins, to generate fructoselysine-3 phosphate. Fructoselysine-3 phosphate adducts are unstable and decompose under physiological conditions. Involved in intracellular deglycation in erythrocytes and pancreatic islets. Involved in the response to oxidative stress by mediating deglycation of NFE2L2/NRF2, glycation impairing NFE2L2/NRF2 function. Also able to phosphorylate psicosamines and ribulosamines. This chain is Fructosamine-3-kinase, found in Mus musculus (Mouse).